The chain runs to 176 residues: Interleukin-19 (176 aa).

The signal sequence occupies residues 1 to 24 (MKTQCASTWLLGMTLILCSVHIYS). 3 cysteine pairs are disulfide-bonded: Cys-28-Cys-120, Cys-74-Cys-126, and Cys-75-Cys-128. Asn-56 is a glycosylation site (N-linked (GlcNAc...) asparagine). Residues Asn-127 and Asn-134 are each glycosylated (N-linked (GlcNAc...) asparagine).

It belongs to the IL-10 family.

Its subcellular location is the secreted. Its function is as follows. Cytokine that functions as an anti-inflammatory and proangiogenic factor. Polarizes adaptive immunity to an anti-inflammatory phenotype through induction of T-helper 2 responses by both down-regulation of IFN-gamma and up-regulation of IL4 and IL5. Produced by osteocytes, stimulates granulopoiesis and neutrophil formation. Exerts its biological effect through a receptor complex consisting of a heterodimer of IL20RA and IL20RB. In turn, activates the Janus kinase (JAK) and signal transducer and activator of transcription (STAT) pathway, and importantly, STAT3. The polypeptide is Interleukin-19 (Il19) (Mus musculus (Mouse)).